A 380-amino-acid chain; its full sequence is Cytochrome b (380 aa).

4 helical membrane-spanning segments follow: residues 34-54, 78-99, 114-134, and 179-199; these read FGSL…LLAM, WLIR…YFHI, WNTG…GYVL, and FFAL…IHLT. 2 residues coordinate heme b: His84 and His98. Residues His183 and His197 each coordinate heme b. His202 serves as a coordination point for a ubiquinone. 4 consecutive transmembrane segments (helical) span residues 227–247, 289–309, 321–341, and 348–368; these read LKDI…ALFS, LGGV…PFLH, ISQL…WVGS, and FIII…VLFP.

This sequence belongs to the cytochrome b family. As to quaternary structure, the cytochrome bc1 complex contains 11 subunits: 3 respiratory subunits (MT-CYB, CYC1 and UQCRFS1), 2 core proteins (UQCRC1 and UQCRC2) and 6 low-molecular weight proteins (UQCRH/QCR6, UQCRB/QCR7, UQCRQ/QCR8, UQCR10/QCR9, UQCR11/QCR10 and a cleavage product of UQCRFS1). This cytochrome bc1 complex then forms a dimer. The cofactor is heme b.

The protein localises to the mitochondrion inner membrane. In terms of biological role, component of the ubiquinol-cytochrome c reductase complex (complex III or cytochrome b-c1 complex) that is part of the mitochondrial respiratory chain. The b-c1 complex mediates electron transfer from ubiquinol to cytochrome c. Contributes to the generation of a proton gradient across the mitochondrial membrane that is then used for ATP synthesis. This Pachyptila turtur (Fairy prion) protein is Cytochrome b (MT-CYB).